The chain runs to 457 residues: tRNA-2-methylthio-N(6)-dimethylallyladenosine synthase (457 aa).

The 116-residue stretch at 19–134 (RKLFIETYGC…LPNLVGAVEH (116 aa)) folds into the MTTase N-terminal domain. Cys28, Cys64, Cys98, Cys172, Cys176, and Cys179 together coordinate [4Fe-4S] cluster. The Radical SAM core domain maps to 158–390 (PGVHISGFVS…IDLQNKLSEE (233 aa)). Residues 393 to 456 (LRDIGKTFEV…SATLFGEPVE (64 aa)) enclose the TRAM domain.

It belongs to the methylthiotransferase family. MiaB subfamily. As to quaternary structure, monomer. Requires [4Fe-4S] cluster as cofactor.

It localises to the cytoplasm. It catalyses the reaction N(6)-dimethylallyladenosine(37) in tRNA + (sulfur carrier)-SH + AH2 + 2 S-adenosyl-L-methionine = 2-methylsulfanyl-N(6)-dimethylallyladenosine(37) in tRNA + (sulfur carrier)-H + 5'-deoxyadenosine + L-methionine + A + S-adenosyl-L-homocysteine + 2 H(+). In terms of biological role, catalyzes the methylthiolation of N6-(dimethylallyl)adenosine (i(6)A), leading to the formation of 2-methylthio-N6-(dimethylallyl)adenosine (ms(2)i(6)A) at position 37 in tRNAs that read codons beginning with uridine. The protein is tRNA-2-methylthio-N(6)-dimethylallyladenosine synthase of Parabacteroides distasonis (strain ATCC 8503 / DSM 20701 / CIP 104284 / JCM 5825 / NCTC 11152).